The sequence spans 589 residues: Lipoprotein LpqB (589 aa).

The N-terminal stretch at 1-20 (MMRGVLVIMRLLCLGMLFTG) is a signal peptide. Residue C21 is the site of N-palmitoyl cysteine attachment. Residue C21 is the site of S-diacylglycerol cysteine attachment.

This sequence belongs to the LpqB lipoprotein family.

It localises to the cell membrane. This Mycobacterium leprae (strain TN) protein is Lipoprotein LpqB.